Consider the following 178-residue polypeptide: GTP-dependent dephospho-CoA kinase (178 aa).

5 residues coordinate GTP: aspartate 48, isoleucine 49, aspartate 67, lysine 69, and glutamate 126.

Belongs to the GTP-dependent DPCK family.

It carries out the reaction 3'-dephospho-CoA + GTP = GDP + CoA + H(+). It participates in cofactor biosynthesis; coenzyme A biosynthesis. In terms of biological role, catalyzes the GTP-dependent phosphorylation of the 3'-hydroxyl group of dephosphocoenzyme A to form coenzyme A (CoA). The protein is GTP-dependent dephospho-CoA kinase of Methanothrix thermoacetophila (strain DSM 6194 / JCM 14653 / NBRC 101360 / PT) (Methanosaeta thermophila).